A 421-amino-acid polypeptide reads, in one-letter code: ATP-dependent RNA helicase RhlB (421 aa).

The Q motif signature appears at 9–37; the sequence is QKFSDFALHPKVVEALEKKGFHNCTPIQA. The Helicase ATP-binding domain occupies 40 to 219; it reads LPLTLAGRDV…FEQMNNAEYI (180 aa). ATP is bound at residue 53–60; the sequence is AQTGTGKT. Residues 165 to 168 carry the DEAD box motif; sequence DEAD. Residues 245–390 form the Helicase C-terminal domain; the sequence is RLLQTLIEEE…VSKYNPDALM (146 aa). A disordered region spans residues 392 to 421; sequence DLPKPLRLTRPRTGNGPRRTGAPRNRRRSG. Positions 402-414 are enriched in low complexity; sequence PRTGNGPRRTGAP.

It belongs to the DEAD box helicase family. RhlB subfamily. In terms of assembly, component of the RNA degradosome, which is a multiprotein complex involved in RNA processing and mRNA degradation.

It is found in the cytoplasm. The enzyme catalyses ATP + H2O = ADP + phosphate + H(+). Functionally, DEAD-box RNA helicase involved in RNA degradation. Has RNA-dependent ATPase activity and unwinds double-stranded RNA. The protein is ATP-dependent RNA helicase RhlB of Escherichia coli (strain SMS-3-5 / SECEC).